A 383-amino-acid chain; its full sequence is VDAFADDLLLLVQGNRRNELEQSASEALSVVYRYGTNIGVEVSDSKTVCMMLKGSLNMLNRVVHVSTNGMDDKRIRCVDRVRYLGVNVGIGMDFSVHIDGMKRRLTTAIMRLRGVLRKSWGLKRGVVSMVVKGLFLPAVMYGASVWYEQLHKRKLRGSRRLSEELVSCQRVVLYACTRVCRTVSTEAMQILFGSLPWDIECFRRANCTKSKGPAMNESDLVTDEDLYELSLHECRELVDQRALAAWQDRWEATSNGRVTYEWIRDVGFSGRSMKYFGAEPEGLLRLTGHGSMNSFLFSRNLSNSPACACGTEREDWIHVLCECDMYAAFRDLDSIGVRRTEVGWDVSGVLLDRASMSVCVPLSSCAFRMRELIVQRMRENEES.

A Reverse transcriptase domain is found at 1-88 (VDAFADDLLL…DRVRYLGVNV (88 aa)). The tract at residues 229-383 (LSLHECRELV…VQRMRENEES (155 aa)) is nucleic acid-binding endonuclease.

The enzyme catalyses DNA(n) + a 2'-deoxyribonucleoside 5'-triphosphate = DNA(n+1) + diphosphate. In Nasonia vitripennis (Parasitic wasp), this protein is Retrovirus-related Pol polyprotein from type-1 retrotransposable element R1 3.